A 202-amino-acid chain; its full sequence is MKSSPKSLKMRDNLLDGTFVVIDLEATGFDVEKSEVIDLAAVRVEGGIITEKFSTLVYPGYFIPERIKKLTGITNAMLVGQPTIEEVLPEFLEFVGDNIVVGHFVEQDIKFINKYTKQYRGKKFRNPSLCTLKLARKVFPGLKKYSLKEIAENFGFETNGVHRALKDATLTAEIFIKILEELWFKYGIGDYYSLKRLEKGKF.

A divalent metal cation is bound by residues D23 and E25. Residues D23 and E25 each coordinate substrate. The Proton acceptor role is filled by H162. D167 contacts a divalent metal cation. D167 is a substrate binding site.

In terms of assembly, DNA polymerase III contains a core (composed of alpha, epsilon and theta chains) that associates with a tau subunit. This core dimerizes to form the POLIII' complex. PolIII' associates with the gamma complex (composed of gamma, delta, delta', psi and chi chains) and with the beta chain to form the complete DNA polymerase III complex. Mg(2+) serves as cofactor. Mn(2+) is required as a cofactor.

It catalyses the reaction DNA(n) + a 2'-deoxyribonucleoside 5'-triphosphate = DNA(n+1) + diphosphate. Its function is as follows. DNA polymerase III is a complex, multichain enzyme responsible for most of the replicative synthesis in bacteria. The epsilon subunit contain the editing function and is a proofreading 3'-5' exonuclease. The sequence is that of DNA polymerase III subunit epsilon (dnaQ) from Aquifex aeolicus (strain VF5).